Reading from the N-terminus, the 173-residue chain is Large ribosomal subunit protein uL16 (173 aa).

It belongs to the universal ribosomal protein uL16 family.

This Methanococcus maripaludis (strain C5 / ATCC BAA-1333) protein is Large ribosomal subunit protein uL16.